Here is an 88-residue protein sequence, read N- to C-terminus: Elongation factor 1-beta (88 aa).

This sequence belongs to the EF-1-beta/EF-1-delta family.

Its function is as follows. Promotes the exchange of GDP for GTP in EF-1-alpha/GDP, thus allowing the regeneration of EF-1-alpha/GTP that could then be used to form the ternary complex EF-1-alpha/GTP/AAtRNA. This chain is Elongation factor 1-beta (ef1b), found in Archaeoglobus fulgidus (strain ATCC 49558 / DSM 4304 / JCM 9628 / NBRC 100126 / VC-16).